The following is a 387-amino-acid chain: Mannitol-1-phosphate 5-dehydrogenase (387 aa).

NAD(+) is bound at residue 3 to 14; it reads AVHFGAGNIGRG.

The protein belongs to the mannitol dehydrogenase family.

The catalysed reaction is D-mannitol 1-phosphate + NAD(+) = beta-D-fructose 6-phosphate + NADH + H(+). This is Mannitol-1-phosphate 5-dehydrogenase from Pseudarthrobacter chlorophenolicus (strain ATCC 700700 / DSM 12829 / CIP 107037 / JCM 12360 / KCTC 9906 / NCIMB 13794 / A6) (Arthrobacter chlorophenolicus).